A 282-amino-acid polypeptide reads, in one-letter code: CD320 antigen (282 aa).

Residues 1–35 (MSGGWMAQVGAWRTGALGLALLLLLGLGLGLEAAA) form the signal peptide. At 36 to 229 (SPLSTPTSAQ…GDQSGSPTAY (194 aa)) the chain is on the extracellular side. Residues 53-90 (SCPPTKFQCRTSGLCVPLTWRCDRDLDCSDGSDEEECR) form the LDL-receptor class A 1 domain. Cystine bridges form between cysteine 54/cysteine 67, cysteine 61/cysteine 80, and cysteine 74/cysteine 89. 6 residues coordinate Ca(2+): tryptophan 72, aspartate 75, aspartate 77, aspartate 79, aspartate 85, and glutamate 86. Asparagine 126 is a glycosylation site (N-linked (GlcNAc...) asparagine). The LDL-receptor class A 2 domain maps to 131-168 (ACLAGELRCTLSDDCIPLTWRCDGHPDCPDSSDELGCG). 3 cysteine pairs are disulfide-bonded: cysteine 132-cysteine 145, cysteine 139-cysteine 158, and cysteine 152-cysteine 167. Positions 150, 153, 155, 157, 163, and 164 each coordinate Ca(2+). N-linked (GlcNAc...) asparagine glycans are attached at residues asparagine 195 and asparagine 213. Residues 199–223 (MGPPVTLESVPSVGNATSSSAGDQS) form a disordered region. Over residues 210-223 (SVGNATSSSAGDQS) the composition is skewed to polar residues. A helical transmembrane segment spans residues 230 to 250 (GVIAAAAVLSASLVTATLLLL). Residues 251–282 (SWLRAQERLRPLGLLVAMKESLLLSEQKTSLP) lie on the Cytoplasmic side of the membrane.

As to quaternary structure, interacts (via LDL-receptor class A domains) with TCN2. As to expression, detected in the germinal center (GC) of lymphoid follicles (at protein level). Expressed abundantly on follicular dendritic cells (FDCs).

The protein localises to the cell membrane. Functionally, receptor for transcobalamin saturated with cobalamin (TCbl). Plays an important role in cobalamin uptake. Plasma membrane protein that is expressed on follicular dendritic cells (FDC) and mediates interaction with germinal center B cells. Functions as costimulator to promote B cell responses to antigenic stimuli; promotes B cell differentiation and proliferation. Germinal center-B (GC-B) cells differentiate into memory B-cells and plasma cells (PC) through interaction with T-cells and follicular dendritic cells (FDC). CD320 augments the proliferation of PC precursors generated by IL-10. The sequence is that of CD320 antigen (CD320) from Homo sapiens (Human).